The primary structure comprises 206 residues: Small ribosomal subunit protein uS4A (206 aa).

The S4 RNA-binding domain occupies 98-163; that stretch reads MRLDNVVYRL…SERFKMFAEN (66 aa).

The protein belongs to the universal ribosomal protein uS4 family. In terms of assembly, part of the 30S ribosomal subunit. Contacts protein S5. The interaction surface between S4 and S5 is involved in control of translational fidelity.

Functionally, one of the primary rRNA binding proteins, it binds directly to 16S rRNA where it nucleates assembly of the body of the 30S subunit. With S5 and S12 plays an important role in translational accuracy. The sequence is that of Small ribosomal subunit protein uS4A from Clostridium perfringens (strain ATCC 13124 / DSM 756 / JCM 1290 / NCIMB 6125 / NCTC 8237 / Type A).